The primary structure comprises 213 residues: MSLNLGLIDYGMGNLHSVEKCLERLDQGCSLINNSDDLEGIDALILPGVGAFDPAMANLRATGLVPHLLRWGQEDRPLLGICLGLQLLFEQSDEGSDPGLGLLGGRVTRLPSKSGERIPHMGWAPLKHHGTCPLLSSDASSEWVYFVHSYAAVPTDRNDLKASAPFGDQEVTAVVWRGRVGACQFHPEKSSDAGEQMLKRWLTWLRNGAEPCP.

In terms of domain architecture, Glutamine amidotransferase type-1 spans 4-211 (NLGLIDYGMG…LTWLRNGAEP (208 aa)). Catalysis depends on Cys-82, which acts as the Nucleophile. Active-site residues include His-186 and Glu-188.

As to quaternary structure, heterodimer of HisH and HisF.

Its subcellular location is the cytoplasm. The enzyme catalyses 5-[(5-phospho-1-deoxy-D-ribulos-1-ylimino)methylamino]-1-(5-phospho-beta-D-ribosyl)imidazole-4-carboxamide + L-glutamine = D-erythro-1-(imidazol-4-yl)glycerol 3-phosphate + 5-amino-1-(5-phospho-beta-D-ribosyl)imidazole-4-carboxamide + L-glutamate + H(+). It carries out the reaction L-glutamine + H2O = L-glutamate + NH4(+). It functions in the pathway amino-acid biosynthesis; L-histidine biosynthesis; L-histidine from 5-phospho-alpha-D-ribose 1-diphosphate: step 5/9. Its function is as follows. IGPS catalyzes the conversion of PRFAR and glutamine to IGP, AICAR and glutamate. The HisH subunit catalyzes the hydrolysis of glutamine to glutamate and ammonia as part of the synthesis of IGP and AICAR. The resulting ammonia molecule is channeled to the active site of HisF. The sequence is that of Imidazole glycerol phosphate synthase subunit HisH from Synechococcus sp. (strain CC9605).